The sequence spans 304 residues: MVALGRRSWLVPLAMVLAVSSCLAGPAMAAGKTGQMTVFWGRNKNEGTLKETCDTGLYTTVVISFYSVFGHGRYWGDLSGHDLRVIGADIKHCQSKNIFVFLSIGGAGKDYSLPTSKSAADVADNIWNAHMDGRRPGVFRPFGDAAVDGIDFFIDQGAPDHYDDLARNLYAYNKMYRARTPVRLTATVRCAFPDPRMKKALDTKLFERIHVRFYDDATCSYNHAGLAGVMAQWNKWTARYPGSHVYLGLAAANVPGKNDNVFIKQLYYDLLPNVQKAKNYGGIMLWDRFYDKQTGYGKTVKYWA.

The signal sequence occupies residues M1–A29. A GH18 domain is found at G34–A304. Disulfide bonds link C53/C93 and C190/C219.

It belongs to the glycosyl hydrolase 18 family. Xylanase inhibitor subfamily. Binds to fungal GH11 xylanases. Constitutively expressed in shoots.

The protein resides in the secreted. Fungal xylanase inhibitor. Possesses competitive inhibiting activity against fungal endo-1,4-beta-D-xylanases belonging to glycoside hydrolase family 11 (GH11). May function in plant defense against secreted fungal pathogen xylanases. Is similar to class III chitinases, but does not exhibit chitinase activity. The sequence is that of Xylanase inhibitor protein 1 from Oryza sativa subsp. japonica (Rice).